The chain runs to 336 residues: Dihydroorotate dehydrogenase (quinone) (336 aa).

FMN-binding positions include 62 to 66 (AGLDK) and Thr-86. Lys-66 lines the substrate pocket. 111–115 (NRMGF) provides a ligand contact to substrate. FMN contacts are provided by Asn-139 and Asn-172. Substrate is bound at residue Asn-172. Ser-175 functions as the Nucleophile in the catalytic mechanism. Residue Asn-177 participates in substrate binding. FMN is bound by residues Lys-217 and Thr-245. 246-247 (NT) serves as a coordination point for substrate. FMN-binding positions include Gly-268, Gly-297, and 318-319 (YS).

This sequence belongs to the dihydroorotate dehydrogenase family. Type 2 subfamily. Monomer. Requires FMN as cofactor.

The protein localises to the cell membrane. The catalysed reaction is (S)-dihydroorotate + a quinone = orotate + a quinol. It participates in pyrimidine metabolism; UMP biosynthesis via de novo pathway; orotate from (S)-dihydroorotate (quinone route): step 1/1. Functionally, catalyzes the conversion of dihydroorotate to orotate with quinone as electron acceptor. This is Dihydroorotate dehydrogenase (quinone) from Edwardsiella ictaluri (strain 93-146).